Reading from the N-terminus, the 87-residue chain is Tan_10cys (87 aa).

A signal peptide spans 1–21 (MNLKVLFLLAMVLVTLCLGED). A propeptide spanning residues 22–27 (RVTDRR) is cleaved from the precursor.

Belongs to the teretoxin C (TC) superfamily. Post-translationally, contains 5 disulfide bonds. Expressed by the venom duct.

The protein resides in the secreted. The polypeptide is Tan_10cys (Terebra anilis (Auger snail)).